Here is a 195-residue protein sequence, read N- to C-terminus: Large ribosomal subunit protein bL17 (195 aa).

The tract at residues 132–195 (ARGTRFAARK…TEAKDTKPES (64 aa)) is disordered. Over residues 159–186 (PTAAAVAAEAQAEQPTAEAVAADDAATT) the composition is skewed to low complexity.

Belongs to the bacterial ribosomal protein bL17 family. Part of the 50S ribosomal subunit. Contacts protein L32.

This is Large ribosomal subunit protein bL17 from Parafrankia sp. (strain EAN1pec).